The sequence spans 209 residues: Probable phosphatidylglycerophosphate synthase (209 aa).

The next 4 helical transmembrane spans lie at 32-52 (ILTL…FYGG), 105-125 (ALIG…LILT), 147-167 (WGGK…VLPL), and 171-191 (LHVA…ITGV).

This sequence belongs to the CDP-alcohol phosphatidyltransferase class-I family.

The protein resides in the cell membrane. It catalyses the reaction a CDP-1,2-diacyl-sn-glycerol + sn-glycerol 3-phosphate = a 1,2-diacyl-sn-glycero-3-phospho-(1'-sn-glycero-3'-phosphate) + CMP + H(+). Its pathway is lipid metabolism; phospholipid metabolism. Functionally, probably catalyzes the synthesis of phosphatidylglycerophosphate by transferring a phosphatidyl group from CDP-diacylglycerol to glycerol 3-phosphate. The polypeptide is Probable phosphatidylglycerophosphate synthase (Mycobacterium tuberculosis (strain CDC 1551 / Oshkosh)).